The sequence spans 281 residues: Transcription factor LBX1 (281 aa).

The segment covering Met1–Leu20 has biased composition (basic and acidic residues). The disordered stretch occupies residues Met1–Pro35. Residues Arg125 to Leu184 constitute a DNA-binding region (homeobox). Positions Asn214–Asp281 are disordered. Polar residues predominate over residues Ser253 to Asp267. Residues Cys268–Asp281 show a composition bias toward acidic residues.

In terms of assembly, interacts with SKOR1 which acts as a transcriptional corepressor.

It localises to the nucleus. Transcription factor required for the development of GABAergic interneurons in the dorsal horn of the spinal cord and migration and further development of hypaxial muscle precursor cells for limb muscles, diaphragm and hypoglossal cord. This chain is Transcription factor LBX1 (LBX1), found in Homo sapiens (Human).